Consider the following 834-residue polypeptide: Putative COX1/OXI3 intron 1 protein (834 aa).

A disordered region spans residues 162–188 (MKDTNNTKGNTKSEGSTERGNSGVDRG). A compositionally biased stretch (polar residues) spans 167–181 (NTKGNTKSEGSTERG). Positions 296 to 577 (LSNELGTGKF…TPARFLGYNI (282 aa)) constitute a Reverse transcriptase domain.

It localises to the mitochondrion. The chain is Putative COX1/OXI3 intron 1 protein (AI1) from Saccharomyces cerevisiae (strain ATCC 204508 / S288c) (Baker's yeast).